The sequence spans 64 residues: Large ribosomal subunit protein bL35 (64 aa).

The protein belongs to the bacterial ribosomal protein bL35 family.

This is Large ribosomal subunit protein bL35 from Pseudomonas entomophila (strain L48).